The chain runs to 924 residues: Periplasmic nitrate reductase (924 aa).

The tat-type signal signal peptide spans 1–29; that stretch reads MNRRDFIKNTAIASACGVAGLSVPSSVLA. A 4Fe-4S Mo/W bis-MGD-type domain is found at 35-91; the sequence is WRWDKAVCRFCGTGCGILVARQDGKIVAVKGDPAAPVNRGLNCIKGYFNAKIMYGED. Residues C42, C45, C49, and C77 each contribute to the [4Fe-4S] cluster site. Residues K79, Q147, N172, C176, 209-216, M417, Q421, N527, 552-553, K575, D602, and 814-823 contribute to the Mo-bis(molybdopterin guanine dinucleotide) site; these read WGANMAEM, SD, and TGRVLEHWHS. Residue W890 participates in substrate binding. Residues N898 and K915 each coordinate Mo-bis(molybdopterin guanine dinucleotide).

Belongs to the prokaryotic molybdopterin-containing oxidoreductase family. NasA/NapA/NarB subfamily. Component of the periplasmic nitrate reductase NapAB complex composed of NapA and NapB. The cofactor is [4Fe-4S] cluster. Mo-bis(molybdopterin guanine dinucleotide) is required as a cofactor. Post-translationally, predicted to be exported by the Tat system. The position of the signal peptide cleavage has not been experimentally proven.

It is found in the periplasm. It carries out the reaction 2 Fe(II)-[cytochrome] + nitrate + 2 H(+) = 2 Fe(III)-[cytochrome] + nitrite + H2O. In terms of biological role, catalytic subunit of the periplasmic nitrate reductase complex NapAB. Receives electrons from NapB and catalyzes the reduction of nitrate to nitrite. This chain is Periplasmic nitrate reductase, found in Campylobacter lari (strain RM2100 / D67 / ATCC BAA-1060).